A 628-amino-acid chain; its full sequence is uncharacterized protein (628 aa).

Disordered stretches follow at residues 1-65 (MDTN…ISSA) and 80-125 (SLRN…VSLS). Low complexity predominate over residues 12–21 (ISPSIASSFP). The span at 25 to 37 (PFSSQNSTTSNPE) shows a compositional bias: polar residues. 2 stretches are compositionally biased toward low complexity: residues 48–64 (SSII…NISS) and 87–102 (SPHI…SSSS). A compositionally biased stretch (basic and acidic residues) spans 103-116 (DLDKSMLDEKHPDS). The next 12 membrane-spanning stretches (helical) occupy residues 157 to 177 (IITC…SISL), 203 to 223 (VGTG…NLLM), 230 to 250 (LWLS…AVLG), 259 to 279 (FIAL…GFAF), 294 to 314 (IGWY…LSAA), 324 to 344 (LYGY…QGLF), 417 to 437 (LWPP…LVNY), 454 to 474 (VSLL…TVLP), 483 to 503 (MLFF…TTFV), 511 to 531 (VGLL…MTWV), 542 to 562 (VGVA…SVVA), and 583 to 603 (MCGM…VQKF).

This sequence belongs to the major facilitator superfamily. Allantoate permease family.

The protein resides in the membrane. This is an uncharacterized protein from Schizosaccharomyces pombe (strain 972 / ATCC 24843) (Fission yeast).